The following is a 328-amino-acid chain: 4-hydroxythreonine-4-phosphate dehydrogenase (328 aa).

Substrate contacts are provided by H135 and T136. Residues H165, H210, and H265 each coordinate a divalent metal cation. Residues K273, N282, and R291 each contribute to the substrate site.

It belongs to the PdxA family. As to quaternary structure, homodimer. Requires Zn(2+) as cofactor. Mg(2+) serves as cofactor. Co(2+) is required as a cofactor.

The protein resides in the cytoplasm. The enzyme catalyses 4-(phosphooxy)-L-threonine + NAD(+) = 3-amino-2-oxopropyl phosphate + CO2 + NADH. Its pathway is cofactor biosynthesis; pyridoxine 5'-phosphate biosynthesis; pyridoxine 5'-phosphate from D-erythrose 4-phosphate: step 4/5. Functionally, catalyzes the NAD(P)-dependent oxidation of 4-(phosphooxy)-L-threonine (HTP) into 2-amino-3-oxo-4-(phosphooxy)butyric acid which spontaneously decarboxylates to form 3-amino-2-oxopropyl phosphate (AHAP). This Pseudomonas aeruginosa (strain ATCC 15692 / DSM 22644 / CIP 104116 / JCM 14847 / LMG 12228 / 1C / PRS 101 / PAO1) protein is 4-hydroxythreonine-4-phosphate dehydrogenase.